The sequence spans 699 residues: UvrABC system protein C (699 aa).

Low complexity predominate over residues 1–51 (MIQHPTDTPEVAADAAAEPERAAGAAGATPQPSQDAVEPAADVDAATASLA). A disordered region spans residues 1–59 (MIQHPTDTPEVAADAAAEPERAAGAAGATPQPSQDAVEPAADVDAATASLAAEDDDEPV). Positions 92–170 (TSPGVYRMLN…IKQLRPRFNV (79 aa)) constitute a GIY-YIG domain. The UVR domain maps to 280 to 315 (RLVKQELAGEMEKASAELEFETAALYRDRLAALSAI).

This sequence belongs to the UvrC family. In terms of assembly, interacts with UvrB in an incision complex.

The protein localises to the cytoplasm. The UvrABC repair system catalyzes the recognition and processing of DNA lesions. UvrC both incises the 5' and 3' sides of the lesion. The N-terminal half is responsible for the 3' incision and the C-terminal half is responsible for the 5' incision. This Rhodopseudomonas palustris (strain BisB18) protein is UvrABC system protein C.